Consider the following 580-residue polypeptide: Viral transcription factor IE2 (580 aa).

Residues 1-11 (MESSAKRKMDP) are compositionally biased toward basic and acidic residues. Disordered regions lie at residues 1–30 (MESS…TPVT) and 99–161 (DSSS…VIIK). Residues 99 to 133 (DSSSTGPTLTTHSCSVSSAPLNKPTPTSVAVTNTP) are compositionally biased toward polar residues. Residues Lys-175 and Lys-180 each participate in a glycyl lysine isopeptide (Lys-Gly) (interchain with G-Cter in SUMO) cross-link. The SUMO-interacting motif 1/SIM1 signature appears at 199 to 202 (CIVI). Residues Ser-203 and Ser-205 each carry the phosphoserine; by host CK2 modification. The interval 206–335 (EEEQGEEVET…KSKRISELDN (130 aa)) is disordered. Composition is skewed to low complexity over residues 216-236 (RGAT…TSPT), 259-271 (SSSS…SASD), and 302-317 (AASS…SSGG). An SUMO-interacting motif 1/SIM2 motif is present at residues 410-413 (IQII). An SUMO-interacting motif 1/SIM3 motif is present at residues 501–504 (VDLL).

Belongs to the HHV-5 IE2 protein family. In terms of assembly, interacts with host SUMO-modified form of TATA-binding protein (TBP)-associated factor 12/TAF12 in a SIM-dependent manner; this interaction increases the transactivation activity of IE2. Interacts with host CHAF1A. Interacts with several components of the host transcriptional machinery including TBP, TF2B and CREB1. Interacts with host DNA replication licensing factor MCM3. Interacts with host PLSCR1; this interaction inhibits IE2 transactivating activity. Post-translationally, phosphorylated by host CK2 at Ser-203 and Ser-205; leading to enhanced SUMOylation. SUMOylated; SUMOylation is enhanced when IE2 is phosphorylated by host CK2. The sumoylation is necessary for efficient replication of the virus and thus for the function of this viral transcription factor.

Its subcellular location is the host nucleus. In terms of biological role, stimulates viral early and late gene expression and thus play a crucial role in the regulation of productive infection. Selectively drives host RNA Pol II transcription initiation at a subset of viral early-late and late promoters without substantially affecting Pol II transcription of expressed host genes. Mechanistically, forms a repressive complex at the major immediate-early promoter region involving direct association with host nucleosomes and TBP. Concerning activation, stimulates transcription by binding nearby, but not within, core promoter regions. In addition, activates quiescent cells to reenter the cell cycle and up-regulates several E2F-responsive genes, which are responsible for pushing the cell into S phase. In S-phase, inhibits cellular DNA synthesis and blocks further cell cycle progression. The chain is Viral transcription factor IE2 (UL122) from Human cytomegalovirus (strain AD169) (HHV-5).